The sequence spans 139 residues: Small ribosomal subunit protein bS16 (139 aa).

Residues 84–139 (KGEPAPAPLLQPAEKAARPSFEAIGGEDEGKGEAITQKKKADKKDEAAAESSASEA) form a disordered region.

The protein belongs to the bacterial ribosomal protein bS16 family.

The sequence is that of Small ribosomal subunit protein bS16 from Streptomyces coelicolor (strain ATCC BAA-471 / A3(2) / M145).